The sequence spans 115 residues: Large ribosomal subunit protein bL20 (115 aa).

Belongs to the bacterial ribosomal protein bL20 family.

Binds directly to 23S ribosomal RNA and is necessary for the in vitro assembly process of the 50S ribosomal subunit. It is not involved in the protein synthesizing functions of that subunit. This is Large ribosomal subunit protein bL20 from Salinibacter ruber (strain DSM 13855 / M31).